The chain runs to 415 residues: Serine--tRNA ligase (415 aa).

Residue 231–233 participates in L-serine binding; sequence TAE. 262–264 contacts ATP; that stretch reads RSE. Glu-285 provides a ligand contact to L-serine. 349–352 serves as a coordination point for ATP; sequence EISS. Position 383 (Ser-383) interacts with L-serine.

Belongs to the class-II aminoacyl-tRNA synthetase family. Type-1 seryl-tRNA synthetase subfamily. In terms of assembly, homodimer. The tRNA molecule binds across the dimer.

The protein resides in the cytoplasm. It catalyses the reaction tRNA(Ser) + L-serine + ATP = L-seryl-tRNA(Ser) + AMP + diphosphate + H(+). The enzyme catalyses tRNA(Sec) + L-serine + ATP = L-seryl-tRNA(Sec) + AMP + diphosphate + H(+). Its pathway is aminoacyl-tRNA biosynthesis; selenocysteinyl-tRNA(Sec) biosynthesis; L-seryl-tRNA(Sec) from L-serine and tRNA(Sec): step 1/1. Its function is as follows. Catalyzes the attachment of serine to tRNA(Ser). Is also able to aminoacylate tRNA(Sec) with serine, to form the misacylated tRNA L-seryl-tRNA(Sec), which will be further converted into selenocysteinyl-tRNA(Sec). The protein is Serine--tRNA ligase of Helicobacter pylori (strain ATCC 700392 / 26695) (Campylobacter pylori).